Consider the following 325-residue polypeptide: Probable isoaspartyl peptidase/L-asparaginase GA20639 (325 aa).

Threonine 184 acts as the Nucleophile in catalysis. Residues 212–215 (RIGD) and 235–238 (TGHG) contribute to the substrate site.

This sequence belongs to the Ntn-hydrolase family. As to quaternary structure, heterodimer of an alpha and beta chain produced by autocleavage. Cleaved into an alpha and beta chain by autocatalysis; this activates the enzyme. The N-terminal residue of the beta subunit is responsible for the nucleophile hydrolase activity.

It carries out the reaction L-asparagine + H2O = L-aspartate + NH4(+). It catalyses the reaction Cleavage of a beta-linked Asp residue from the N-terminus of a polypeptide.. Its function is as follows. Has both L-asparaginase and beta-aspartyl peptidase activity. Does not have aspartylglucosaminidase activity and is inactive toward GlcNAc-L-Asn. Likewise, has no activity toward glutamine. The polypeptide is Probable isoaspartyl peptidase/L-asparaginase GA20639 (Drosophila pseudoobscura pseudoobscura (Fruit fly)).